The following is a 363-amino-acid chain: Double-strand-specific pac1 ribonuclease (363 aa).

Disordered stretches follow at residues 1-35 (MGRF…KRSS) and 92-138 (SRHD…PPLR). Residues 13–22 (DSSSSASDSL) are compositionally biased toward low complexity. A compositionally biased stretch (basic residues) spans 24–35 (RGRRSLGHKRSS). At Ser-122 the chain carries Phosphoserine. One can recognise an RNase III domain in the interval 139–262 (SEKLKEQVFM…YLGALILDGQ (124 aa)). In terms of domain architecture, DRBM spans 285 to 356 (RPIDKLAKSK…AMQALEVLAK (72 aa)).

Mg(2+) serves as cofactor.

It catalyses the reaction Endonucleolytic cleavage to 5'-phosphomonoester.. Functionally, digests double-stranded RNA. Converts long double-stranded RNAs into short oligonucleotides, leaving 5'-phosphates on their cleavage products. Probably inhibits mating and meiosis by degrading a specific mRNA required for sexual development. The sequence is that of Double-strand-specific pac1 ribonuclease (pac1) from Schizosaccharomyces pombe (strain 972 / ATCC 24843) (Fission yeast).